The chain runs to 214 residues: Cytochrome b (214 aa).

Helical transmembrane passes span F31–I51, W75–I96, W111–L131, and F176–L196. Heme b-binding residues include H81 and H95. Heme b is bound by residues H180 and H194. A ubiquinone is bound at residue H199.

Belongs to the cytochrome b family. In terms of assembly, the cytochrome bc1 complex contains 3 respiratory subunits (MT-CYB, CYC1 and UQCRFS1), 2 core proteins (UQCRC1 and UQCRC2) and probably 6 low-molecular weight proteins. Heme b is required as a cofactor.

The protein resides in the mitochondrion inner membrane. Component of the ubiquinol-cytochrome c reductase complex (complex III or cytochrome b-c1 complex) that is part of the mitochondrial respiratory chain. The b-c1 complex mediates electron transfer from ubiquinol to cytochrome c. Contributes to the generation of a proton gradient across the mitochondrial membrane that is then used for ATP synthesis. The chain is Cytochrome b (MT-CYB) from Crotalus atrox (Western diamondback rattlesnake).